Reading from the N-terminus, the 220-residue chain is Competence protein ComFC (220 aa).

It belongs to the ComF/GntX family. In terms of assembly, monomer and dimer in solution. Interacts with ComFA and DprA; ComFA-ComFC form rings about 150 Angstroms in diameter with apparent 6-fold symmetry.

Functionally, involved in transformation (genetic competence for DNA uptake). The protein is Competence protein ComFC of Streptococcus pneumoniae (strain ATCC BAA-255 / R6).